The chain runs to 430 residues: Meiotically up-regulated gene 132 protein (430 aa).

Belongs to the UPF0300 family.

The protein localises to the mitochondrion. In terms of biological role, has a role in meiosis. This Schizosaccharomyces pombe (strain 972 / ATCC 24843) (Fission yeast) protein is Meiotically up-regulated gene 132 protein (mug132).